The primary structure comprises 136 residues: Glutamate-rich protein 4 (136 aa).

The disordered stretch occupies residues 92–136 (EEEEEEEQEEKSCVEENKGPEEKQDEERSRSSYPAQRLPDFGMTI). Residues 101-121 (EKSCVEENKGPEEKQDEERSR) show a composition bias toward basic and acidic residues.

The polypeptide is Glutamate-rich protein 4 (Erich4) (Mus musculus (Mouse)).